The chain runs to 101 residues: Small ribosomal subunit protein uS14 (101 aa).

The protein belongs to the universal ribosomal protein uS14 family. As to quaternary structure, part of the 30S ribosomal subunit. Contacts proteins S3 and S10.

Functionally, binds 16S rRNA, required for the assembly of 30S particles and may also be responsible for determining the conformation of the 16S rRNA at the A site. The polypeptide is Small ribosomal subunit protein uS14 (Arthrobacter sp. (strain FB24)).